The chain runs to 383 residues: Cobalt-precorrin-5B C(1)-methyltransferase (383 aa).

The protein belongs to the CbiD family.

It carries out the reaction Co-precorrin-5B + S-adenosyl-L-methionine = Co-precorrin-6A + S-adenosyl-L-homocysteine. It participates in cofactor biosynthesis; adenosylcobalamin biosynthesis; cob(II)yrinate a,c-diamide from sirohydrochlorin (anaerobic route): step 6/10. Catalyzes the methylation of C-1 in cobalt-precorrin-5B to form cobalt-precorrin-6A. The sequence is that of Cobalt-precorrin-5B C(1)-methyltransferase from Prochlorococcus marinus (strain MIT 9313).